The primary structure comprises 1128 residues: Apoptosis-stimulating of p53 protein 2 (1128 aa).

The interval Pro-85–Asn-120 is disordered. An interaction with APPBP1 region spans residues Asn-332–Gly-348. A disordered region spans residues Met-393–Leu-436. Polar residues predominate over residues Trp-413 to Gly-433. Phosphoserine is present on residues Ser-479, Ser-555, Ser-568, Ser-571, and Ser-575. Disordered regions lie at residues Gln-549–Ala-596 and Asn-654–Leu-705. Residues Gly-562 to Glu-574 are compositionally biased toward polar residues. Residues Asn-654 to Lys-669 are compositionally biased toward polar residues. The segment covering His-684–Pro-693 has biased composition (basic and acidic residues). 3 positions are modified to phosphoserine: Ser-697, Ser-713, and Ser-736. Disordered regions lie at residues Lys-723–Ile-748, Ser-802–Pro-824, and Pro-870–Asn-907. The SH3-binding signature appears at Tyr-866–Pro-875. Positions Ser-876–Ala-1128 are mediates interaction with APC2. ANK repeat units follow at residues Glu-958–Ala-987 and Asp-991–Ala-1020. In terms of domain architecture, SH3 spans Met-1057–Arg-1119.

This sequence belongs to the ASPP family. Interacts with P53/TP53; the interaction promotes pro-apoptotic activity. Interacts with BCL2. Interacts with protein phosphatase 1. Interacts with RELA NF-kappa-B subunit. This interaction probably prevents the activation of apoptosis, possibly by preventing its interaction with p53/TP53. Interacts with APC2 and APPBP1. Interacts with DDX42 (via the C-terminus); the interaction is not inhibited by TP53BP2 ubiquitination and is independent of p53/TP53.

Its subcellular location is the cytoplasm. The protein localises to the perinuclear region. It localises to the nucleus. Regulator that plays a central role in regulation of apoptosis and cell growth via its interactions with proteins such as TP53. Regulates p53/TP53 by enhancing the DNA binding and transactivation function of p53/TP53 on the promoters of proapoptotic genes in vivo. Inhibits the ability of APPBP1 to conjugate NEDD8 to CUL1, and thereby decreases APPBP1 ability to induce apoptosis. Impedes cell cycle progression at G2/M. Its apoptosis-stimulating activity is inhibited by its interaction with DDX42. The sequence is that of Apoptosis-stimulating of p53 protein 2 (Tp53bp2) from Mus musculus (Mouse).